A 717-amino-acid polypeptide reads, in one-letter code: Polyribonucleotide nucleotidyltransferase (717 aa).

Mg(2+)-binding residues include aspartate 486 and aspartate 492. Positions 553-612 constitute a KH domain; the sequence is PKIVQLQIDIDKISLVIGSTGKTVKAITDEFEVRVQIEQDGRITLFGTDSLKMQKAKAKI. One can recognise an S1 motif domain in the interval 622–715; that stretch reads GEIYDGIVKK…KFGKIELELV (94 aa). The tract at residues 659 to 689 is disordered; it reads RYGDMRHSRYGSGRHSRYGRDNRNTFGMNPP. The segment covering 666-675 has biased composition (basic residues); the sequence is SRYGSGRHSR.

Belongs to the polyribonucleotide nucleotidyltransferase family. Mg(2+) is required as a cofactor.

The protein resides in the cytoplasm. It catalyses the reaction RNA(n+1) + phosphate = RNA(n) + a ribonucleoside 5'-diphosphate. Involved in mRNA degradation. Catalyzes the phosphorolysis of single-stranded polyribonucleotides processively in the 3'- to 5'-direction. This Borrelia hermsii (strain HS1 / DAH) protein is Polyribonucleotide nucleotidyltransferase.